The following is a 333-amino-acid chain: Chlorophyllide reductase 35.5 kDa chain (333 aa).

Residues 1–17 (MTDAPELKAFDQRLRDE) show a composition bias toward basic and acidic residues. The interval 1–30 (MTDAPELKAFDQRLRDEAAEEPTLEVPQGE) is disordered. Residues 45 to 50 (GIGKSF) and Lys74 each bind ATP. Residue Ser49 participates in Mg(2+) binding. [4Fe-4S] cluster contacts are provided by Cys130 and Cys165. 219–220 (NK) is a binding site for ATP.

It belongs to the NifH/BchL/ChlL family. In terms of assembly, homodimer. Chlorophyllide reductase is composed of three subunits; BchX, BchY and BchZ. The cofactor is [4Fe-4S] cluster.

The catalysed reaction is 3-deacetyl-3-vinylbacteriochlorophyllide a + 2 oxidized [2Fe-2S]-[ferredoxin] + ADP + phosphate = chlorophyllide a + 2 reduced [2Fe-2S]-[ferredoxin] + ATP + H2O + H(+). It carries out the reaction bacteriochlorophyllide a + 2 oxidized [2Fe-2S]-[ferredoxin] + ADP + phosphate = 3-acetyl-3-devinylchlorophyllide a + 2 reduced [2Fe-2S]-[ferredoxin] + ATP + H2O + H(+). The enzyme catalyses 3-deacetyl-3-(1-hydroxyethyl)bacteriochlorophyllide a + 2 oxidized [2Fe-2S]-[ferredoxin] + ADP + phosphate = 3-devinyl-3-(1-hydroxyethyl)chlorophyllide a + 2 reduced [2Fe-2S]-[ferredoxin] + ATP + H2O + H(+). Its pathway is porphyrin-containing compound metabolism; bacteriochlorophyll biosynthesis. Its function is as follows. Converts chlorophylls (Chl) into bacteriochlorophylls (BChl) by reducing ring B of the tetrapyrrole. In Cereibacter sphaeroides (strain ATCC 17023 / DSM 158 / JCM 6121 / CCUG 31486 / LMG 2827 / NBRC 12203 / NCIMB 8253 / ATH 2.4.1.) (Rhodobacter sphaeroides), this protein is Chlorophyllide reductase 35.5 kDa chain (bchX).